The following is a 199-amino-acid chain: DnaJ homolog subfamily C member 5B (199 aa).

2 positions are modified to phosphoserine: serine 14 and serine 16. A J domain is found at serine 19 to glycine 84.

Interacts with the chaperone complex consisting of HSC70 and SGTA. In terms of processing, palmitoylated.

The protein localises to the membrane. This chain is DnaJ homolog subfamily C member 5B (Dnajc5b), found in Mus musculus (Mouse).